Here is a 144-residue protein sequence, read N- to C-terminus: Large ribosomal subunit protein uL13 (144 aa).

Belongs to the universal ribosomal protein uL13 family. As to quaternary structure, part of the 50S ribosomal subunit.

Functionally, this protein is one of the early assembly proteins of the 50S ribosomal subunit, although it is not seen to bind rRNA by itself. It is important during the early stages of 50S assembly. This is Large ribosomal subunit protein uL13 from Desulfovibrio desulfuricans (strain ATCC 27774 / DSM 6949 / MB).